Reading from the N-terminus, the 210-residue chain is FMN-dependent NADH:quinone oxidoreductase (210 aa).

Residues 17-19, 102-105, and 148-151 each bind FMN; these read SRS, MWNL, and SCGG.

This sequence belongs to the azoreductase type 1 family. In terms of assembly, homodimer. FMN is required as a cofactor.

The enzyme catalyses 2 a quinone + NADH + H(+) = 2 a 1,4-benzosemiquinone + NAD(+). It carries out the reaction N,N-dimethyl-1,4-phenylenediamine + anthranilate + 2 NAD(+) = 2-(4-dimethylaminophenyl)diazenylbenzoate + 2 NADH + 2 H(+). Functionally, quinone reductase that provides resistance to thiol-specific stress caused by electrophilic quinones. Its function is as follows. Also exhibits azoreductase activity. Catalyzes the reductive cleavage of the azo bond in aromatic azo compounds to the corresponding amines. This chain is FMN-dependent NADH:quinone oxidoreductase, found in Trichlorobacter lovleyi (strain ATCC BAA-1151 / DSM 17278 / SZ) (Geobacter lovleyi).